The following is a 117-amino-acid chain: Large ribosomal subunit protein bL20 (117 aa).

The protein belongs to the bacterial ribosomal protein bL20 family.

Its function is as follows. Binds directly to 23S ribosomal RNA and is necessary for the in vitro assembly process of the 50S ribosomal subunit. It is not involved in the protein synthesizing functions of that subunit. The sequence is that of Large ribosomal subunit protein bL20 from Wolinella succinogenes (strain ATCC 29543 / DSM 1740 / CCUG 13145 / JCM 31913 / LMG 7466 / NCTC 11488 / FDC 602W) (Vibrio succinogenes).